The chain runs to 699 residues: Homeobox-leucine zipper protein HDG8 (699 aa).

The segment at 1–31 (MDNNGGGSSGNEQYTSGDAKQNGKRTCHRHT) is disordered. Residues 10–19 (GNEQYTSGDA) show a composition bias toward polar residues. Over residues 22 to 31 (NGKRTCHRHT) the composition is skewed to basic residues. Positions 23–82 (GKRTCHRHTPQQIQRLEAYFKECPHPDERQRNQLCRELKLEPDQIKFWFQNKRTQSKTQE) form a DNA-binding region, homeobox. The stretch at 89-149 (LLRGENETLQ…LKDHRDRISN (61 aa)) forms a coiled coil. The region spanning 204-438 (AETDMSLLSE…LERMCERMAL (235 aa)) is the START domain.

Belongs to the HD-ZIP homeobox family. Class IV subfamily. Interacts with ANT. Expressed in the embryo at early stage and in the endosperm.

The protein resides in the nucleus. Probable transcription factor. This Arabidopsis thaliana (Mouse-ear cress) protein is Homeobox-leucine zipper protein HDG8.